The following is a 206-amino-acid chain: Small ribosomal subunit protein uS4 (206 aa).

An S4 RNA-binding domain is found at 96-156 (CRLDNVVYRM…EKAKNQLRIA (61 aa)).

It belongs to the universal ribosomal protein uS4 family. As to quaternary structure, part of the 30S ribosomal subunit. Contacts protein S5. The interaction surface between S4 and S5 is involved in control of translational fidelity.

Its function is as follows. One of the primary rRNA binding proteins, it binds directly to 16S rRNA where it nucleates assembly of the body of the 30S subunit. In terms of biological role, with S5 and S12 plays an important role in translational accuracy. The chain is Small ribosomal subunit protein uS4 from Azotobacter vinelandii (strain DJ / ATCC BAA-1303).